We begin with the raw amino-acid sequence, 660 residues long: MKAVIFAYHDMGCQGVQAVLDAGYDIAAIFTHADNPAENTFFGSVSRLAAGLGIPVYAPDNVNHPIWVDRIAELAPDIIFSFYYRNLLSEEILHLAPAGAFNLHGSLLPAYRGRAPLNWVLVNGESETGVTLHRMVKRADAGEIVASQRVAIAQDDVALTLHHKLCQAARQLLNSILPTMKCGDIPSVPQRESDATYYGRRRPEDGLIDWHKPVSTVHNLVRAVAAPWPGAFSYNGSQKFTIWSSRICPDAQGALPGSVISVSPLRVACADGALEIITGQAGDGITVQGSQLAQTLGLVAGARLNRPPATSGKRRIRVLILGVNGFIGNHLTERLLNEENYEVYGMDIGSNAISRFLLHPRFHFVEGDISIHSEWIEYHVKKCDVVLPLVAIATPIEYTRNPLRVFELDFEENLRIIRYCVKYRKRVVFPSTSEVYGMCTDASFDEDKSNLIVGPVNKPRWIYSVSKQLLDRVIWAYGEKEGLRFTLFRPFNWMGPRLDSLNAARIGSSRAITQLILNLVEGTPIKLIDGGQQKRCFTDIRDGIEALFRIIVNDGDRCDGKIINIGNPDNEASIQELATLLLDSFDKHPLRCHFPPFAGFQVVESRSYYGKGYQDVAHRKPSIDNARRCLGWEPSIAMRDTVEETLDFFLRSVDVAERAS.

The tract at residues 1–304 is formyltransferase ArnAFT; the sequence is MKAVIFAYHD…TLGLVAGARL (304 aa). The Proton donor; for formyltransferase activity role is filled by histidine 104. (6R)-10-formyltetrahydrofolate is bound by residues arginine 114 and 136–140; that span reads VKRAD. The tract at residues 314–660 is dehydrogenase ArnADH; that stretch reads RRIRVLILGV…RSVDVAERAS (347 aa). Residues aspartate 347 and 368-369 contribute to the NAD(+) site; that span reads DI. UDP-alpha-D-glucuronate-binding positions include alanine 393, tyrosine 398, and 432–433; that span reads TS. Catalysis depends on glutamate 434, which acts as the Proton acceptor; for decarboxylase activity. UDP-alpha-D-glucuronate contacts are provided by residues arginine 460, asparagine 492, 526–535, and tyrosine 613; that span reads KLIDGGQQKR. The active-site Proton donor; for decarboxylase activity is arginine 619.

This sequence in the N-terminal section; belongs to the Fmt family. UDP-L-Ara4N formyltransferase subfamily. In the C-terminal section; belongs to the NAD(P)-dependent epimerase/dehydratase family. UDP-glucuronic acid decarboxylase subfamily. In terms of assembly, homohexamer, formed by a dimer of trimers.

The enzyme catalyses UDP-alpha-D-glucuronate + NAD(+) = UDP-beta-L-threo-pentopyranos-4-ulose + CO2 + NADH. It carries out the reaction UDP-4-amino-4-deoxy-beta-L-arabinose + (6R)-10-formyltetrahydrofolate = UDP-4-deoxy-4-formamido-beta-L-arabinose + (6S)-5,6,7,8-tetrahydrofolate + H(+). The protein operates within nucleotide-sugar biosynthesis; UDP-4-deoxy-4-formamido-beta-L-arabinose biosynthesis; UDP-4-deoxy-4-formamido-beta-L-arabinose from UDP-alpha-D-glucuronate: step 1/3. Its pathway is nucleotide-sugar biosynthesis; UDP-4-deoxy-4-formamido-beta-L-arabinose biosynthesis; UDP-4-deoxy-4-formamido-beta-L-arabinose from UDP-alpha-D-glucuronate: step 3/3. It functions in the pathway bacterial outer membrane biogenesis; lipopolysaccharide biosynthesis. In terms of biological role, bifunctional enzyme that catalyzes the oxidative decarboxylation of UDP-glucuronic acid (UDP-GlcUA) to UDP-4-keto-arabinose (UDP-Ara4O) and the addition of a formyl group to UDP-4-amino-4-deoxy-L-arabinose (UDP-L-Ara4N) to form UDP-L-4-formamido-arabinose (UDP-L-Ara4FN). The modified arabinose is attached to lipid A and is required for resistance to polymyxin and cationic antimicrobial peptides. This Salmonella paratyphi B (strain ATCC BAA-1250 / SPB7) protein is Bifunctional polymyxin resistance protein ArnA.